A 93-amino-acid polypeptide reads, in one-letter code: Phosphoribosyl-ATP pyrophosphatase (93 aa).

This sequence belongs to the PRA-PH family.

Its subcellular location is the cytoplasm. The enzyme catalyses 1-(5-phospho-beta-D-ribosyl)-ATP + H2O = 1-(5-phospho-beta-D-ribosyl)-5'-AMP + diphosphate + H(+). It functions in the pathway amino-acid biosynthesis; L-histidine biosynthesis; L-histidine from 5-phospho-alpha-D-ribose 1-diphosphate: step 2/9. This Mycobacterium avium (strain 104) protein is Phosphoribosyl-ATP pyrophosphatase.